The primary structure comprises 158 residues: Ribonuclease H (158 aa).

An RNase H type-1 domain is found at 1–147; the sequence is MKVTIYTDGA…CDVLATTAAD (147 aa). Mg(2+)-binding residues include D8, E52, D74, and D139.

It belongs to the RNase H family. In terms of assembly, monomer. The cofactor is Mg(2+).

The protein resides in the cytoplasm. The catalysed reaction is Endonucleolytic cleavage to 5'-phosphomonoester.. In terms of biological role, endonuclease that specifically degrades the RNA of RNA-DNA hybrids. This Lachnoclostridium phytofermentans (strain ATCC 700394 / DSM 18823 / ISDg) (Clostridium phytofermentans) protein is Ribonuclease H.